Here is a 491-residue protein sequence, read N- to C-terminus: ATP-dependent protease ATPase subunit HslU (491 aa).

ATP-binding positions include isoleucine 34, glycine 76–glutamate 81, aspartate 296, glutamate 364, and arginine 436.

Belongs to the ClpX chaperone family. HslU subfamily. In terms of assembly, a double ring-shaped homohexamer of HslV is capped on each side by a ring-shaped HslU homohexamer. The assembly of the HslU/HslV complex is dependent on binding of ATP.

It localises to the cytoplasm. In terms of biological role, ATPase subunit of a proteasome-like degradation complex; this subunit has chaperone activity. The binding of ATP and its subsequent hydrolysis by HslU are essential for unfolding of protein substrates subsequently hydrolyzed by HslV. HslU recognizes the N-terminal part of its protein substrates and unfolds these before they are guided to HslV for hydrolysis. This chain is ATP-dependent protease ATPase subunit HslU, found in Chlorobaculum tepidum (strain ATCC 49652 / DSM 12025 / NBRC 103806 / TLS) (Chlorobium tepidum).